Reading from the N-terminus, the 273-residue chain is SUMO-1 cysteine protease S273R (273 aa).

Active-site residues include His-168 and Asn-187. Gln-226 lines the substrate pocket. Cys-232 acts as the Nucleophile in catalysis.

This sequence belongs to the peptidase C63 family.

It is found in the host cytoplasm. Its subcellular location is the virion. In terms of biological role, cysteine protease that plays several role during infection including processing of the structural polyprotein or inhibition of the host immune response. Catalyzes the maturation of the pp220 and pp62 polyprotein precursors into core-shell proteins. Plays a role in the disruption of host pyroptosis via specific cleavage of gasdermin D/GSDMD. In addition, strongly decreases the host cGAS-STING signaling by targeting IKBKE via its enzymatic activity. Also impairs host FOXJ1-mediated antiviral effect via degradation of FOXJ1. This chain is SUMO-1 cysteine protease S273R, found in Ornithodoros (relapsing fever ticks).